Reading from the N-terminus, the 341-residue chain is tRNA N6-adenosine threonylcarbamoyltransferase (341 aa).

Fe cation-binding residues include His111 and His115. Residues 134 to 138 (LVSGG), Asp167, Gly180, and Asn276 contribute to the substrate site. Asp304 is a Fe cation binding site.

This sequence belongs to the KAE1 / TsaD family. Fe(2+) is required as a cofactor.

The protein resides in the cytoplasm. The catalysed reaction is L-threonylcarbamoyladenylate + adenosine(37) in tRNA = N(6)-L-threonylcarbamoyladenosine(37) in tRNA + AMP + H(+). In terms of biological role, required for the formation of a threonylcarbamoyl group on adenosine at position 37 (t(6)A37) in tRNAs that read codons beginning with adenine. Is involved in the transfer of the threonylcarbamoyl moiety of threonylcarbamoyl-AMP (TC-AMP) to the N6 group of A37, together with TsaE and TsaB. TsaD likely plays a direct catalytic role in this reaction. This Pseudomonas fluorescens (strain Pf0-1) protein is tRNA N6-adenosine threonylcarbamoyltransferase.